A 651-amino-acid polypeptide reads, in one-letter code: L-type lectin-domain containing receptor kinase IX.1 (651 aa).

The signal sequence occupies residues 1 to 19 (MANSILLFSFVLVLPFVCS). Residues 20 to 251 (VQFNISRFGS…GNRLLSWEFS (232 aa)) form a legume-lectin like region. The Extracellular portion of the chain corresponds to 20–269 (VQFNISRFGS…KKSQNDKKGM (250 aa)). Asn-23, Asn-125, Asn-129, Asn-162, Asn-169, Asn-174, Asn-195, and Asn-211 each carry an N-linked (GlcNAc...) asparagine glycan. The helical transmembrane segment at 270–290 (IIGISVSGFVLLTFFITSLIV) threads the bilayer. Residues 291–651 (FLKRKQQKKK…VTFSSAQHGR (361 aa)) lie on the Cytoplasmic side of the membrane. In terms of domain architecture, Protein kinase spans 335–616 (FADDRKLGEG…LNLEAPVPHL (282 aa)). Residues 341-349 (LGEGGFGAV) and Lys-364 each bind ATP. The active-site Proton acceptor is the Asp-459. The segment at 630–651 (SNTTSVSSGGATVTFSSAQHGR) is disordered.

This sequence in the C-terminal section; belongs to the protein kinase superfamily. Ser/Thr protein kinase family. In the N-terminal section; belongs to the leguminous lectin family. As to quaternary structure, interacts with ABCG40.

Its subcellular location is the cell membrane. The enzyme catalyses L-seryl-[protein] + ATP = O-phospho-L-seryl-[protein] + ADP + H(+). It carries out the reaction L-threonyl-[protein] + ATP = O-phospho-L-threonyl-[protein] + ADP + H(+). Functionally, promotes hydrogen peroxide H(2)O(2) production and cell death. Involved in resistance response to the pathogenic oomycetes Phytophthora infestans and Phytophthora capsici. This Arabidopsis thaliana (Mouse-ear cress) protein is L-type lectin-domain containing receptor kinase IX.1.